Reading from the N-terminus, the 296-residue chain is dTDP-rhamnosyl transferase RfbF (296 aa).

This sequence belongs to the glycosyltransferase 2 family.

It participates in bacterial outer membrane biogenesis; lipopolysaccharide biosynthesis. This chain is dTDP-rhamnosyl transferase RfbF (rfbF), found in Shigella flexneri.